The following is a 686-amino-acid chain: XK-related protein 5 (686 aa).

5 helical membrane passes run 33–53 (LLWG…QALS), 205–225 (HFWV…WLVA), 239–259 (LFNL…WDSP), 265–285 (VTFY…ATDF), and 297–317 (IAGV…YYSL). Disordered regions lie at residues 339–387 (GDKT…PPEA), 448–468 (ALSA…LENS), and 490–592 (FASD…APFP). Residues 340-359 (DKTERRDSPRATDLAGKRTE) show a composition bias toward basic and acidic residues. Polar residues-rich tracts occupy residues 450–468 (SAQQ…LENS) and 490–509 (FASD…TQGE). Residues 523 to 536 (QGKGTGGQQRGGEG) are compositionally biased toward gly residues. Positions 550 to 567 (VATSSQQEGSPATLQTAH) are enriched in polar residues.

The protein belongs to the XK family.

Its subcellular location is the cell membrane. The protein is XK-related protein 5 of Homo sapiens (Human).